A 225-amino-acid polypeptide reads, in one-letter code: Cytidylate kinase (225 aa).

ATP is bound at residue 12-20 (GPSGAGKGT).

The protein belongs to the cytidylate kinase family. Type 1 subfamily.

It localises to the cytoplasm. The enzyme catalyses CMP + ATP = CDP + ADP. It catalyses the reaction dCMP + ATP = dCDP + ADP. This chain is Cytidylate kinase, found in Pectobacterium atrosepticum (strain SCRI 1043 / ATCC BAA-672) (Erwinia carotovora subsp. atroseptica).